The following is a 286-amino-acid chain: Bifunctional protein FolD (286 aa).

NADP(+) is bound by residues 165–167 and Ser-190; that span reads GRS.

This sequence belongs to the tetrahydrofolate dehydrogenase/cyclohydrolase family. Homodimer.

The enzyme catalyses (6R)-5,10-methylene-5,6,7,8-tetrahydrofolate + NADP(+) = (6R)-5,10-methenyltetrahydrofolate + NADPH. It carries out the reaction (6R)-5,10-methenyltetrahydrofolate + H2O = (6R)-10-formyltetrahydrofolate + H(+). The protein operates within one-carbon metabolism; tetrahydrofolate interconversion. In terms of biological role, catalyzes the oxidation of 5,10-methylenetetrahydrofolate to 5,10-methenyltetrahydrofolate and then the hydrolysis of 5,10-methenyltetrahydrofolate to 10-formyltetrahydrofolate. This chain is Bifunctional protein FolD, found in Burkholderia orbicola (strain MC0-3).